Reading from the N-terminus, the 207-residue chain is ATP synthase subunit b 2 (207 aa).

The helical transmembrane segment at 53–72 (TYASQLLWLVITFSVFYLLM) threads the bilayer.

Belongs to the ATPase B chain family. In terms of assembly, F-type ATPases have 2 components, F(1) - the catalytic core - and F(0) - the membrane proton channel. F(1) has five subunits: alpha(3), beta(3), gamma(1), delta(1), epsilon(1). F(0) has three main subunits: a(1), b(2) and c(10-14). The alpha and beta chains form an alternating ring which encloses part of the gamma chain. F(1) is attached to F(0) by a central stalk formed by the gamma and epsilon chains, while a peripheral stalk is formed by the delta and b chains.

It localises to the cell inner membrane. F(1)F(0) ATP synthase produces ATP from ADP in the presence of a proton or sodium gradient. F-type ATPases consist of two structural domains, F(1) containing the extramembraneous catalytic core and F(0) containing the membrane proton channel, linked together by a central stalk and a peripheral stalk. During catalysis, ATP synthesis in the catalytic domain of F(1) is coupled via a rotary mechanism of the central stalk subunits to proton translocation. Its function is as follows. Component of the F(0) channel, it forms part of the peripheral stalk, linking F(1) to F(0). The b'-subunit is a diverged and duplicated form of b found in plants and photosynthetic bacteria. This Rhizobium leguminosarum bv. trifolii (strain WSM2304) protein is ATP synthase subunit b 2 (atpF2).